Reading from the N-terminus, the 245-residue chain is MSENIYGIHAVSAFLNNAPERLIEVYALKGRDDKRLQPLLNELHRLGITIQFVNRQTLDKKAEGEVHQGIMARVQPAKELNEADLDTLLQNQSNPLLLVLDGVTDPHNLGACLRTADAAGVCAVIVPKDKSAQLTAIARKVACGAAEVVPLIRVTNLARTLRELQQKHNIWVVGTAGEATNTLYQTQLTGGLALVMGAEGEGMRRLTREHCDQLISIPMAGSVSSLNVSVATGVCLFEIVRQRLA.

Positions 197, 217, and 226 each coordinate S-adenosyl-L-methionine.

Belongs to the class IV-like SAM-binding methyltransferase superfamily. RNA methyltransferase TrmH family. RlmB subfamily.

It localises to the cytoplasm. The catalysed reaction is guanosine(2251) in 23S rRNA + S-adenosyl-L-methionine = 2'-O-methylguanosine(2251) in 23S rRNA + S-adenosyl-L-homocysteine + H(+). Its function is as follows. Specifically methylates the ribose of guanosine 2251 in 23S rRNA. In Pasteurella multocida (strain Pm70), this protein is 23S rRNA (guanosine-2'-O-)-methyltransferase RlmB.